The primary structure comprises 54 residues: Large ribosomal subunit protein bL33A (54 aa).

The protein belongs to the bacterial ribosomal protein bL33 family.

The protein is Large ribosomal subunit protein bL33A of Saccharopolyspora erythraea (strain ATCC 11635 / DSM 40517 / JCM 4748 / NBRC 13426 / NCIMB 8594 / NRRL 2338).